Consider the following 469-residue polypeptide: Interstitial collagenase (469 aa).

The signal sequence occupies residues 1 to 19 (MFSLLLLLLLLCNTGSHGF). The propeptide at 20–99 (PAATSETQEQ…PRCGVPDVAE (80 aa)) is activation peptide. Ser57 carries the phosphoserine modification. A Cysteine switch motif is present at residues 90–97 (PRCGVPDV). Cys92 lines the Zn(2+) pocket. Asn120 carries N-linked (GlcNAc...) asparagine glycosylation. Positions 124 and 158 each coordinate Ca(2+). Positions 168 and 170 each coordinate Zn(2+). Ca(2+) contacts are provided by Asp175, Gly176, Gly178, and Asn180. Residue His183 participates in Zn(2+) binding. 3 residues coordinate Ca(2+): Gly190, Gly192, and Asp194. His196 is a binding site for Zn(2+). Positions 198, 199, and 201 each coordinate Ca(2+). His218 provides a ligand contact to Zn(2+). Glu219 is a catalytic residue. His222 and His228 together coordinate Zn(2+). At Thr274 the chain carries Phosphothreonine. Hemopexin repeat units lie at residues 275-324 (PQVC…WPQV), 325-371 (PNGL…FGFP), 374-422 (VKNI…FPGI), and 423-466 (GNKV…WFNC). Cysteines 278 and 466 form a disulfide. Ca(2+)-binding residues include Asp285 and Gln329. Tyr360 carries the phosphotyrosine; by PKDCC modification. 2 residues coordinate Ca(2+): Asp378 and Asp427.

This sequence belongs to the peptidase M10A family. The cofactor is Ca(2+). Zn(2+) is required as a cofactor. Post-translationally, undergoes autolytic cleavage to produce a N-terminal fragment having reduced collagenolytic activity. In terms of processing, tyrosine phosphorylated in platelets by PKDCC/VLK.

The protein resides in the secreted. It localises to the extracellular space. Its subcellular location is the extracellular matrix. It catalyses the reaction Cleavage of the triple helix of collagen at about three-quarters of the length of the molecule from the N-terminus, at 775-Gly-|-Ile-776 in the alpha1(I) chain. Cleaves synthetic substrates and alpha-macroglobulins at bonds where P1' is a hydrophobic residue.. Can be activated without removal of the activation peptide. Its function is as follows. Cleaves collagens of types I, II, and III at one site in the helical domain. Also cleaves collagens of types VII and X. The polypeptide is Interstitial collagenase (MMP1) (Sus scrofa (Pig)).